The primary structure comprises 910 residues: Protein translocase subunit SecA (910 aa).

ATP contacts are provided by residues Q89, G107 to T111, and D502. Zn(2+)-binding residues include C889, C891, C900, and H901.

It belongs to the SecA family. As to quaternary structure, monomer and homodimer. Part of the essential Sec protein translocation apparatus which comprises SecA, SecYEG and auxiliary proteins SecDF-YajC and YidC. Zn(2+) is required as a cofactor.

It is found in the cell inner membrane. Its subcellular location is the cytoplasm. It catalyses the reaction ATP + H2O + cellular proteinSide 1 = ADP + phosphate + cellular proteinSide 2.. Functionally, part of the Sec protein translocase complex. Interacts with the SecYEG preprotein conducting channel. Has a central role in coupling the hydrolysis of ATP to the transfer of proteins into and across the cell membrane, serving both as a receptor for the preprotein-SecB complex and as an ATP-driven molecular motor driving the stepwise translocation of polypeptide chains across the membrane. This chain is Protein translocase subunit SecA, found in Bartonella bacilliformis (strain ATCC 35685 / KC583 / Herrer 020/F12,63).